Reading from the N-terminus, the 513-residue chain is Activin receptor type-2A (513 aa).

Residues 1–19 form the signal peptide; the sequence is MGAAAKLAFAVFLISCSSG. Residues 20-135 are Extracellular-facing; it reads AILGRSETQE…TSNPVTPKPP (116 aa). Intrachain disulfides connect Cys-30–Cys-60, Cys-50–Cys-78, Cys-85–Cys-104, Cys-91–Cys-103, and Cys-105–Cys-110. N-linked (GlcNAc...) asparagine glycans are attached at residues Asn-43 and Asn-66. The chain crosses the membrane as a helical span at residues 136–161; it reads YYNILLYSLVPLMLIAGIVICAFWVY. At 162-513 the chain is on the cytoplasmic side; the sequence is RHHKMAYPPV…VDFPPKESSL (352 aa). A Protein kinase domain is found at 192-485; sequence LQLLEVKARG…GERITQMQRL (294 aa). Residues 198-206 and Lys-219 each bind ATP; that span reads KARGRFGCV. The active-site Proton acceptor is Asp-322.

It belongs to the protein kinase superfamily. TKL Ser/Thr protein kinase family. TGFB receptor subfamily. In terms of assembly, part of a complex consisting of MAGI2/ARIP1, ACVR2A, ACVR1B and SMAD3. Interacts with MAGI2/ARIP1. Interacts with type I receptor ACVR1. Interacts with BMP7. Interacts with TSC22D1/TSC-22. Interacts with activin A/INHBA. Mg(2+) serves as cofactor. Mn(2+) is required as a cofactor. Brain, testis, intestine, liver and kidney.

The protein localises to the cell membrane. It catalyses the reaction L-threonyl-[receptor-protein] + ATP = O-phospho-L-threonyl-[receptor-protein] + ADP + H(+). The catalysed reaction is L-seryl-[receptor-protein] + ATP = O-phospho-L-seryl-[receptor-protein] + ADP + H(+). Its function is as follows. On ligand binding, forms a receptor complex consisting of two type II and two type I transmembrane serine/threonine kinases. Type II receptors phosphorylate and activate type I receptors which autophosphorylate, then bind and activate SMAD transcriptional regulators. Receptor for activin A, activin B and inhibin A. Mediates induction of adipogenesis by GDF6. This Mus musculus (Mouse) protein is Activin receptor type-2A.